Consider the following 571-residue polypeptide: Hemagglutinin-neuraminidase (571 aa).

Over 1–26 the chain is Intravirion; that stretch reads MDRAVSRVVLENEEREAKNTWRFVFR. A helical membrane pass occupies residues 27 to 47; it reads IAVLLLIVMTLAISAAALVYS. The Virion surface portion of the chain corresponds to 48–571; the sequence is MGASTPRDLA…LVEILKDDRV (524 aa). The N-linked (GlcNAc...) asparagine; by host glycan is linked to Asn119. Positions 124 to 152 are important for interaction with fusion/F protein; that stretch reads GAPVHDPDYIGGIGKELIVDDTSDVTSFY. Intrachain disulfides connect Cys172–Cys196, Cys186–Cys247, and Cys238–Cys251. The tract at residues 234–239 is involved in neuraminidase activity; it reads NRKSCS. N-linked (GlcNAc...) asparagine; by host glycosylation occurs at Asn341. An intrachain disulfide couples Cys455 to Cys465. N-linked (GlcNAc...) asparagine; by host glycans are attached at residues Asn481 and Asn508. Cys531 and Cys542 form a disulfide bridge.

Belongs to the paramyxoviruses hemagglutinin-neuraminidase family. As to quaternary structure, homotetramer; composed of disulfide-linked homodimers. Interacts with F protein trimer. Interacts with host CG-1B; this interaction inhibits viral adsorption and replication rather than internalization.

It localises to the virion membrane. The protein resides in the host cell membrane. It carries out the reaction Hydrolysis of alpha-(2-&gt;3)-, alpha-(2-&gt;6)-, alpha-(2-&gt;8)- glycosidic linkages of terminal sialic acid residues in oligosaccharides, glycoproteins, glycolipids, colominic acid and synthetic substrates.. Its function is as follows. Mediates the viral entry into the host cell together with fusion/F protein. Attaches the virus to sialic acid-containing cell receptors and thereby initiates infection. Binding of HN protein to the receptor induces a conformational change that allows the F protein to trigger virion/cell membranes fusion. Functionally, neuraminidase activity ensures the efficient spread of the virus by dissociating the mature virions from the neuraminic acid containing glycoproteins. The protein is Hemagglutinin-neuraminidase (HN) of Newcastle disease virus (strain Iba/85) (NDV).